The sequence spans 2167 residues: SH3 and multiple ankyrin repeat domains protein 1 (2167 aa).

The disordered stretch occupies residues 1–63; the sequence is MTHSPATSED…TRGLQGRSMS (63 aa). Residues 17–32 are compositionally biased toward low complexity; it reads SECPEGGSESDSSPDG. Residues 33–47 show a composition bias toward gly residues; that stretch reads PGRGPQGTRGRGSGA. Arg-43 bears the Omega-N-methylarginine mark. Tyr-186 carries the post-translational modification Phosphotyrosine. 6 ANK repeats span residues 212-242, 246-275, 279-309, 313-342, 346-375, and 379-407; these read SGET…HIDF, DGMT…SPNY, RGLT…QLGI, NGWQ…EPGA, SGNT…NKDV, and NGQT…EQDV. Disordered stretches follow at residues 413 to 432 and 454 to 546; these read SPKY…TVPP and PGAS…SRGR. Residues 454–479 are compositionally biased toward low complexity; that stretch reads PGASSSGTPGPTSGSQGQSQPSAPST. A compositionally biased stretch (gly residues) spans 527-542; sequence PAGGTGGSGGPGGSLG. A Phosphoserine modification is found at Ser-540. Position 544 is an omega-N-methylarginine (Arg-544). Residues 554 to 613 enclose the SH3 domain; it reads VPGRSFMAVKSYQAQGEGEISLSKGEKIKVLSIGEGGFWEGQVKGRVGWFPSDCLEEVAN. A PDZ domain is found at 663–757; the sequence is TVLLQKKDSE…TLMVKVVMVT (95 aa). Ser-671 and Ser-791 each carry phosphoserine. The segment at 841 to 894 is disordered; sequence ISASESPGPGGLASLGKHRPKGFFATESSFDPHHRSQPSYDRPSFLPPGPGLML. At Ser-898 the chain carries Phosphoserine. Disordered stretches follow at residues 917 to 1233 and 1245 to 1290; these read SRSL…LDFT and RREG…RHSK. The span at 928–947 shows a compositional bias: pro residues; sequence IPPPPTTSPPEPPYSTPPAP. Arg-958 bears the Omega-N-methylarginine mark. Residues 969–980 are compositionally biased toward low complexity; the sequence is PLPASSPSSFDG. Residues 1004–1028 are compositionally biased toward basic residues; sequence AHHHPPHHHHHHAPPPQPHHHHAHP. Arg-1059 carries the omega-N-methylarginine modification. The segment covering 1064-1089 has biased composition (low complexity); sequence SPTSGAPSPSHHSSSGGSSGPAQAPA. Omega-N-methylarginine is present on residues Arg-1098 and Arg-1109. Composition is skewed to low complexity over residues 1132–1146 and 1171–1184; these read SLPP…ALPR and STSS…GSST. The segment covering 1203-1224 has biased composition (pro residues); sequence SPAPATSPVPPSPSPVPTPASP. Residues 1245-1256 are compositionally biased toward basic and acidic residues; the sequence is RREGGWQNEARR. An Asymmetric dimethylarginine modification is found at Arg-1257. Position 1291 is a phosphoserine (Ser-1291). 8 disordered regions span residues 1308 to 1331, 1361 to 1417, 1429 to 1458, 1500 to 1725, 1740 to 1790, 1828 to 1866, 1898 to 1988, and 2002 to 2029; these read GGSS…GSSS, LAAR…VLRL, RAGL…PPTA, FLEN…AGVA, GQAF…TPTS, VPPV…QPQA, PWAR…STRH, and RRAP…LPIL. Over residues 1363–1372 the composition is skewed to basic and acidic residues; that stretch reads ARERALKESS. Pro residues predominate over residues 1378-1395; it reads PQPPPRPPSPRYDAPPPT. Basic residues predominate over residues 1396-1408; the sequence is LHHHSPHSPHSPH. Residue Arg-1429 is modified to Omega-N-methylarginine. Ser-1442 is subject to Phosphoserine. A compositionally biased stretch (low complexity) spans 1530–1541; sequence RRVLPTSPTSPR. Residues 1589–1615 are compositionally biased toward pro residues; that stretch reads PLTPGPPHPLPDPPSPATPLPAAPPPA. Positions 1624-1641 are enriched in polar residues; it reads DSTASSLTSYDSEVATLT. Positions 1648-1676 are enriched in pro residues; it reads PGDPPAPGPPAPAAPAPPAPQPGPDPPPG. The segment covering 1684–1694 has biased composition (basic and acidic residues); it reads VDSRSSSDHPL. Residues 1695–1708 are compositionally biased toward low complexity; the sequence is ETISSASTLSSLSA. Residues 1709–1724 are compositionally biased toward gly residues; it reads EGGGNTGGVAGGGAGV. Over residues 1850–1861 the composition is skewed to pro residues; it reads PGPPPPPLPGPL. Arg-1901 carries the omega-N-methylarginine modification. Composition is skewed to low complexity over residues 1934–1945, 1960–1985, and 2002–2012; these read SQTSLLSKPSSS, TGSG…ASAS, and RRAPSPSLLPA. Omega-N-methylarginine occurs at positions 2022, 2042, and 2080. The SAM domain occupies 2104–2167; that stretch reads WTKFDVADWL…DRALKFFLER (64 aa).

This sequence belongs to the SHANK family. As to quaternary structure, may homomultimerize via its SAM domain. Interacts with the C-terminus of SSTR2 via the PDZ domain. Interacts with SHARPIN, SPTAN1, HOMER1 and DLGAP1/GKAP. Part of a complex with DLG4/PSD-95 and DLGAP1/GKAP. Interacts with BAIAP2. Interacts with IGSF9. Interacts with HOMER1 and HOMER3. In brain, highly expressed in cortex, hippocampus and cerebellum.

Its subcellular location is the cytoplasm. The protein localises to the synapse. It localises to the postsynaptic density. Functionally, seems to be an adapter protein in the postsynaptic density (PSD) of excitatory synapses that interconnects receptors of the postsynaptic membrane including NMDA-type and metabotropic glutamate receptors, and the actin-based cytoskeleton. Plays a role in the structural and functional organization of the dendritic spine and synaptic junction. Overexpression promotes maturation of dendritic spines and the enlargement of spine heads via its ability to recruit Homer to postsynaptic sites, and enhances presynaptic function. The chain is SH3 and multiple ankyrin repeat domains protein 1 (Shank1) from Mus musculus (Mouse).